The sequence spans 294 residues: 4-hydroxy-tetrahydrodipicolinate synthase (294 aa).

Position 47 (Thr47) interacts with pyruvate. Tyr136 (proton donor/acceptor) is an active-site residue. The active-site Schiff-base intermediate with substrate is the Lys164. Val206 is a pyruvate binding site.

The protein belongs to the DapA family. Homotetramer; dimer of dimers.

It localises to the cytoplasm. It carries out the reaction L-aspartate 4-semialdehyde + pyruvate = (2S,4S)-4-hydroxy-2,3,4,5-tetrahydrodipicolinate + H2O + H(+). The protein operates within amino-acid biosynthesis; L-lysine biosynthesis via DAP pathway; (S)-tetrahydrodipicolinate from L-aspartate: step 3/4. Functionally, catalyzes the condensation of (S)-aspartate-beta-semialdehyde [(S)-ASA] and pyruvate to 4-hydroxy-tetrahydrodipicolinate (HTPA). This chain is 4-hydroxy-tetrahydrodipicolinate synthase, found in Nostoc sp. (strain PCC 7120 / SAG 25.82 / UTEX 2576).